Here is a 389-residue protein sequence, read N- to C-terminus: Indole-3-acetate monooxygenase (389 aa).

Belongs to the HpaH/HsaA monooxygenase family.

The catalysed reaction is (indol-3-yl)acetate + NADH + O2 + H(+) = 2-hydroxy-(1H-indol-3-yl)acetate + NAD(+) + H2O. It catalyses the reaction indole + NADH + O2 + H(+) = indoxyl + NAD(+) + H2O. Involved in the degradation of the plant hormone indole-3-acetic acid (IAA). Catalyzes the first step of the pathway, the conversion of IAA to 2-hydroxy-IAA (2-OH-IAA). Can also convert indole to indoxyl, which spontaneously dimerizes in the presence of oxygen to form the blue pigment indigo. This chain is Indole-3-acetate monooxygenase, found in Acinetobacter baumannii (strain ATCC 19606 / DSM 30007 / JCM 6841 / CCUG 19606 / CIP 70.34 / NBRC 109757 / NCIMB 12457 / NCTC 12156 / 81).